The sequence spans 505 residues: Activin receptor type-1B (505 aa).

Residues methionine 1 to glycine 23 form the signal peptide. Residues serine 24–glutamate 126 lie on the Extracellular side of the membrane. A glycan (N-linked (GlcNAc...) asparagine) is linked at asparagine 43. The helical transmembrane segment at leucine 127–isoleucine 149 threads the bilayer. Over asparagine 150 to isoleucine 505 the chain is Cytoplasmic. Positions lysine 177–threonine 206 constitute a GS domain. Positions isoleucine 207–leucine 497 constitute a Protein kinase domain. ATP contacts are provided by residues isoleucine 213–valine 221 and lysine 234. Catalysis depends on aspartate 335, which acts as the Proton acceptor. A Phosphotyrosine modification is found at tyrosine 380.

Belongs to the protein kinase superfamily. TKL Ser/Thr protein kinase family. TGFB receptor subfamily. As to quaternary structure, forms an activin receptor complex with activin receptor type-2 (ACVR2A or ACVR2B). Part of a complex consisting of MAGI2/ARIP1, ACVR2A, ACVR1B and SMAD3. Interacts with SMAD2 and SMAD3. Interacts with SMAD7. Interacts with FKBP1A. Interacts with IGSF1. Interacts with CRIPTO. Interacts with TDP2. Interacts with TSC22D1/TSC-22. It depends on Mg(2+) as a cofactor. Mn(2+) serves as cofactor. In terms of processing, autophosphorylated. Phosphorylated by activin receptor type-2 (ACVR2A or ACVR2B) in response to activin-binding at serine and threonine residues in the GS domain. Phosphorylation of ACVR1B by activin receptor type-2 regulates association with SMAD7. Post-translationally, ubiquitinated. Level of ubiquitination is regulated by the SMAD7-SMURF1 complex. Ubiquitinated. In terms of tissue distribution, expressed in many tissues, most strongly in kidney, pancreas, brain, lung, and liver.

Its subcellular location is the cell membrane. It carries out the reaction L-threonyl-[receptor-protein] + ATP = O-phospho-L-threonyl-[receptor-protein] + ADP + H(+). The enzyme catalyses L-seryl-[receptor-protein] + ATP = O-phospho-L-seryl-[receptor-protein] + ADP + H(+). With respect to regulation, activin receptor type-2 (ACVR2A or ACVR2B) activates the type-1 receptor through phosphorylation of its regulatory GS domain. Its function is as follows. Transmembrane serine/threonine kinase activin type-1 receptor forming an activin receptor complex with activin receptor type-2 (ACVR2A or ACVR2B). Transduces the activin signal from the cell surface to the cytoplasm and is thus regulating a many physiological and pathological processes including neuronal differentiation and neuronal survival, hair follicle development and cycling, FSH production by the pituitary gland, wound healing, extracellular matrix production, immunosuppression and carcinogenesis. Activin is also thought to have a paracrine or autocrine role in follicular development in the ovary. Within the receptor complex, type-2 receptors (ACVR2A and/or ACVR2B) act as a primary activin receptors whereas the type-1 receptors like ACVR1B act as downstream transducers of activin signals. Activin binds to type-2 receptor at the plasma membrane and activates its serine-threonine kinase. The activated receptor type-2 then phosphorylates and activates the type-1 receptor such as ACVR1B. Once activated, the type-1 receptor binds and phosphorylates the SMAD proteins SMAD2 and SMAD3, on serine residues of the C-terminal tail. Soon after their association with the activin receptor and subsequent phosphorylation, SMAD2 and SMAD3 are released into the cytoplasm where they interact with the common partner SMAD4. This SMAD complex translocates into the nucleus where it mediates activin-induced transcription. Inhibitory SMAD7, which is recruited to ACVR1B through FKBP1A, can prevent the association of SMAD2 and SMAD3 with the activin receptor complex, thereby blocking the activin signal. Activin signal transduction is also antagonized by the binding to the receptor of inhibin-B via the IGSF1 inhibin coreceptor. ACVR1B also phosphorylates TDP2. The chain is Activin receptor type-1B (ACVR1B) from Homo sapiens (Human).